A 555-amino-acid chain; its full sequence is Disabled homolog 1 (555 aa).

A disordered region spans residues 1–26; that stretch reads MSTETELQVAVKTSAKKDSRKKGQDR. Residues 15 to 26 are compositionally biased toward basic and acidic residues; the sequence is AKKDSRKKGQDR. The PID domain maps to 36–189; sequence KGEGVRYKAK…CEQAVYQTIL (154 aa). A phosphotyrosine mark is found at Y198, Y220, and Y232. Disordered stretches follow at residues 384-410, 418-437, and 468-555; these read LTPLATVPGTSDSTRPSPQTDKPRQKM, FQMAQPPPVPSRKPDQPSLT, and NLTP…QAGS. Polar residues predominate over residues 391–403; that stretch reads PGTSDSTRPSPQT. Low complexity-rich tracts occupy residues 470–479 and 487–501; these read TPVTSTTPST and PRQSSPSKSSASHAS. S491 is subject to Phosphoserine; by CDK5. Positions 504 to 513 are enriched in acidic residues; it reads TTDDIFEEGF.

As to quaternary structure, associates with the SH2 domains of SRC, FYN and ABL. Interacts (phosphorylated on tyrosine residues) with CRK and CRKL (via respective SH2 domain). Interacts with DAB2IP, SIAH1, LRP8 and VLDLR. Interacts with LRP1. Interacts with APLP1 (via NPXY motif). Interacts with DAB2IP. Interacts with ZSWIM8. Phosphorylated by FYN on Tyr-198 and Tyr-220 upon reelin induction in embryonic neurons. Also phosphorylated on Ser-491 independently of reelin signaling. In terms of processing, ubiquitinated by various cullin-5-RING E3 ubiquitin-protein ligase complexes (ECS complexes) following ligand-binding and phosphorylation, leading to its degradation. Ubiquitinated by the ECS(SOCS7) complex in the cortical plate of the developing cerebral cortex following ligand-binding and phosphorylation by FYN, leading to its degradation by the proteasome. Recognized by ZSWIM8 through a disorder targets misorder mechanism that eliminates misfolded DAB1 via ubiquitination and proteasomal degradation.

It localises to the cytoplasm. Functionally, signaling adapter of the reelin-mediated signaling pathway, which regulates the migration and differentiation of postmitotic neurons during brain development. Mediates intracellular transduction of Reelin signaling following reelin (RELN)-binding to its receptor: acts by docking proteins through its phosphotyrosine residues and PID domain. In Macaca fascicularis (Crab-eating macaque), this protein is Disabled homolog 1 (DAB1).